The following is a 2529-amino-acid chain: Zinc finger FYVE domain-containing protein 26 (2529 aa).

3 disordered regions span residues 584–650 (HLPE…PGPH), 689–709 (SSHRTPEETKLPEDQSCSAAR), and 733–810 (VTSN…RFQT). Residues serine 605 and serine 609 each carry the phosphoserine modification. Residues 689–701 (SSHRTPEETKLPE) are compositionally biased toward basic and acidic residues. A compositionally biased stretch (basic residues) spans 755-765 (SSLRRGRRTRR). Positions 778–796 (SLEGTSSELSTSTSEGSLS) are enriched in low complexity. The residue at position 791 (serine 791) is a Phosphoserine. A compositionally biased stretch (polar residues) spans 797–810 (AVSGQVESDSRFQT). Residues 859 to 884 (MFVERYQEVIQELARVEHKIENQNSD) are a coiled coil. The disordered stretch occupies residues 1258-1286 (GLPLSTLGSPRPSENPSAERKSHSSPKDS). Over residues 1263-1273 (TLGSPRPSENP) the composition is skewed to polar residues. A compositionally biased stretch (basic and acidic residues) spans 1274 to 1283 (SAERKSHSSP). Positions 1488–1515 (VSDMAVQEELKSELQRKLMELRVYQKIL) form a coiled coil. Phosphoserine occurs at positions 1732, 1754, 1770, and 1772. The segment at 1762–1799 (APGSALVRSPSPKERAFPQTQPPVEFVPPETPPARDQW) is disordered. The FYVE-type zinc-finger motif lies at 1802-1862 (DETESVCMVC…VCDQCYSYYN (61 aa)). Residues cysteine 1808, cysteine 1811, cysteine 1825, cysteine 1828, cysteine 1833, cysteine 1836, cysteine 1854, and cysteine 1857 each contribute to the Zn(2+) site. The disordered stretch occupies residues 1865–1884 (TPEESPCQSEVPDSAKNESP).

It belongs to the ZFYVE26 family. As to quaternary structure, interacts with AP5Z1, AP5B1, AP5S1 and SPG11. Interacts with TTC19 and KIF13A.

The protein resides in the cytoplasm. The protein localises to the cytoskeleton. It is found in the microtubule organizing center. Its subcellular location is the centrosome. It localises to the midbody. Phosphatidylinositol 3-phosphate-binding protein required for the abscission step in cytokinesis: recruited to the midbody during cytokinesis and acts as a regulator of abscission. May also be required for efficient homologous recombination DNA double-strand break repair. The protein is Zinc finger FYVE domain-containing protein 26 (Zfyve26) of Mus musculus (Mouse).